Reading from the N-terminus, the 1429-residue chain is Dicer-like protein 2 (1429 aa).

One can recognise a Helicase ATP-binding domain in the interval 21 to 200 (MFEASLKGNI…TIEMNLNSVC (180 aa)). 34–41 (MGTGSGKT) serves as a coordination point for ATP. Residues 141-144 (DEAH) carry the DEAH box motif. The Helicase C-terminal domain maps to 335 to 501 (ALISFLMSTE…EDRRRTEELR (167 aa)). Residues 528-622 (AMQHLVHFCD…LPLTKSREFT (95 aa)) enclose the Dicer dsRNA-binding fold domain. 2 RNase III domains span residues 874–1014 (ATRL…IDGG) and 1056–1250 (QENL…VDSG). Mg(2+)-binding residues include Glu-1095, Asp-1236, and Glu-1239.

It belongs to the helicase family. Dicer subfamily. The cofactor is Mg(2+). Requires Mn(2+) as cofactor.

Functionally, dicer-like endonuclease involved in cleaving double-stranded RNA in the RNA interference (RNAi) pathway. Produces 21 to 25 bp dsRNAs (siRNAs) which target the selective destruction of homologous RNAs leading to sequence-specific suppression of gene expression, called post-transcriptional gene silencing (PTGS). Part of a broad host defense response against viral infection and transposons. This is Dicer-like protein 2 (dcl2) from Emericella nidulans (strain FGSC A4 / ATCC 38163 / CBS 112.46 / NRRL 194 / M139) (Aspergillus nidulans).